The chain runs to 366 residues: GDSL esterase/lipase At1g74460 (366 aa).

The signal sequence occupies residues 1-20 (MKFCAIFVLFIVLAINGYDC). Ser-30 serves as the catalytic Nucleophile. 2 N-linked (GlcNAc...) asparagine glycosylation sites follow: Asn-113 and Asn-260. Catalysis depends on residues Asp-320 and His-323.

Belongs to the 'GDSL' lipolytic enzyme family.

It is found in the secreted. In Arabidopsis thaliana (Mouse-ear cress), this protein is GDSL esterase/lipase At1g74460.